A 430-amino-acid chain; its full sequence is Serine--tRNA ligase (430 aa).

The segment at 103-127 is disordered; sequence LPNIPDDDVPDGRDENDNQEVSRWG. 237-239 lines the L-serine pocket; that stretch reads TAE. ATP is bound at residue 268–270; sequence RSE. Glu291 contributes to the L-serine binding site. Residue 355–358 participates in ATP binding; the sequence is EISS. Ser391 provides a ligand contact to L-serine.

Belongs to the class-II aminoacyl-tRNA synthetase family. Type-1 seryl-tRNA synthetase subfamily. As to quaternary structure, homodimer. The tRNA molecule binds across the dimer.

It localises to the cytoplasm. The catalysed reaction is tRNA(Ser) + L-serine + ATP = L-seryl-tRNA(Ser) + AMP + diphosphate + H(+). It catalyses the reaction tRNA(Sec) + L-serine + ATP = L-seryl-tRNA(Sec) + AMP + diphosphate + H(+). It functions in the pathway aminoacyl-tRNA biosynthesis; selenocysteinyl-tRNA(Sec) biosynthesis; L-seryl-tRNA(Sec) from L-serine and tRNA(Sec): step 1/1. Its function is as follows. Catalyzes the attachment of serine to tRNA(Ser). Is also able to aminoacylate tRNA(Sec) with serine, to form the misacylated tRNA L-seryl-tRNA(Sec), which will be further converted into selenocysteinyl-tRNA(Sec). In Sodalis glossinidius (strain morsitans), this protein is Serine--tRNA ligase.